A 497-amino-acid chain; its full sequence is MPNIEADRVTSVPENNDCKSKSQPLRNNLHETVKSYSIQGAATANIEPPAERPYPWGCPVTHTKEKFYTICADYAFLNQATSLCKSSSSVCSSSSEDKSALSNTINYIDLQTSESDSVYNEDASLESLSSNLGTRPLAWEIDKSDFSTMTSKLKRSGVKKQTPKKKPDRKAKPLRDCPQHLILDDVKQRKVLDLRRWYCISRPQYKTSCGISSLVSCWNFLYSTLGAGSLPPITQEEALHILGFQPPFEEIRFGPFTGNTTLMRWFRQINDHFHVKGCSYVLYKPHGKNKTAGETAVGALSKLTQGLKEDSTAYVYHCQNHYFCPIGFEATPVKASKAYRGQLFPHEVEYWILIGEPSRKHPTIHCKKWADIVTDLNTQNPEYFDIRHTERGLQYRKTKKGGNLHCLLAFQRLSWQRFGPWPLQLGTLRPEPQPPVQGRRIPKSESEDNVSKKQHGRLGRSFSAGFQQELAWKRMCNIRERRGSGSPESDTDYEGND.

Disordered regions lie at residues 1–24, 150–173, 426–462, and 478–497; these read MPNI…KSQP, TSKL…KAKP, GTLR…GRSF, and IRER…EGND. Residues 152 to 169 show a composition bias toward basic residues; sequence KLKRSGVKKQTPKKKPDR. Over residues 442–451 the composition is skewed to basic and acidic residues; sequence PKSESEDNVS.

It belongs to the BIVM family.

It is found in the cytoplasm. The protein localises to the nucleus. The chain is Basic immunoglobulin-like variable motif-containing protein (bivm) from Xenopus laevis (African clawed frog).